A 142-amino-acid polypeptide reads, in one-letter code: Large ribosomal subunit protein uL11 (142 aa).

Belongs to the universal ribosomal protein uL11 family. As to quaternary structure, part of the ribosomal stalk of the 50S ribosomal subunit. Interacts with L10 and the large rRNA to form the base of the stalk. L10 forms an elongated spine to which L12 dimers bind in a sequential fashion forming a multimeric L10(L12)X complex. Post-translationally, one or more lysine residues are methylated.

Forms part of the ribosomal stalk which helps the ribosome interact with GTP-bound translation factors. The chain is Large ribosomal subunit protein uL11 from Liberibacter asiaticus (Citrus greening disease).